The following is a 901-amino-acid chain: HTH-type transcriptional regulator MalT (901 aa).

ATP is bound at residue 39–46 (SPAGYGKT). The 66-residue stretch at 829-894 (ELIRTSPLTQ…DAVQHAQQLL (66 aa)) folds into the HTH luxR-type domain. Positions 853-872 (NEQIAGELEVAATTIKTHIR) form a DNA-binding region, H-T-H motif.

It belongs to the MalT family. In terms of assembly, monomer in solution. Oligomerizes to an active state in the presence of the positive effectors ATP and maltotriose.

Its activity is regulated as follows. Activated by ATP and maltotriose, which are both required for DNA binding. In terms of biological role, positively regulates the transcription of the maltose regulon whose gene products are responsible for uptake and catabolism of malto-oligosaccharides. Specifically binds to the promoter region of its target genes, recognizing a short DNA motif called the MalT box. The chain is HTH-type transcriptional regulator MalT from Escherichia fergusonii (strain ATCC 35469 / DSM 13698 / CCUG 18766 / IAM 14443 / JCM 21226 / LMG 7866 / NBRC 102419 / NCTC 12128 / CDC 0568-73).